We begin with the raw amino-acid sequence, 427 residues long: Trigger factor (427 aa).

The PPIase FKBP-type domain maps to 163–248 (GDTAVIDFEG…VHEIKAKELP (86 aa)).

Belongs to the FKBP-type PPIase family. Tig subfamily.

It localises to the cytoplasm. It catalyses the reaction [protein]-peptidylproline (omega=180) = [protein]-peptidylproline (omega=0). Functionally, involved in protein export. Acts as a chaperone by maintaining the newly synthesized protein in an open conformation. Functions as a peptidyl-prolyl cis-trans isomerase. This chain is Trigger factor, found in Bacillus cytotoxicus (strain DSM 22905 / CIP 110041 / 391-98 / NVH 391-98).